The primary structure comprises 146 residues: Large ribosomal subunit protein uL11 (146 aa).

Belongs to the universal ribosomal protein uL11 family. As to quaternary structure, part of the ribosomal stalk of the 50S ribosomal subunit. Interacts with L10 and the large rRNA to form the base of the stalk. L10 forms an elongated spine to which L12 dimers bind in a sequential fashion forming a multimeric L10(L12)X complex. In terms of processing, one or more lysine residues are methylated.

In terms of biological role, forms part of the ribosomal stalk which helps the ribosome interact with GTP-bound translation factors. This is Large ribosomal subunit protein uL11 from Salinibacter ruber (strain DSM 13855 / M31).